A 2697-amino-acid polypeptide reads, in one-letter code: Target of rapamycin homolog (2697 aa).

Residues 1–25 are disordered; it reads MLQQHGISFQMNADRQNKAATTSNR. 7 HEAT repeats span residues 235–272, 649–687, 689–726, 731–768, 815–853, 863–900, and 1073–1110; these read LRVNLFFKYIFNAVRDKNPAVRIAGIDALHVVLTIVSQ, QTIYGVLRAVCSVIVNDQDVRVRMQVISCFGQMPRPFLA, LAQPEMLEVQFMALHDEKLEMQQACVTLLGRLAELNPA, RLRLMLLETLSQMQQSGQARLEQHSAKMIAQLAKQSPK, KNLKPLFEKLTHMINDSSSLHKREAALRAIGGICRSTAY, SLLDDLLRILKTVMSNTMRREAIKTLGILGAIDPYTHK, and KYTGELIPYLLTVLQTDKTKERVLTVKVMESIQKLTHC. Residues 1438–2153 form the FAT domain; the sequence is VLGRWAEQTK…IYALTVASRS (716 aa). Disordered regions lie at residues 1945 to 1981 and 2017 to 2039; these read TVISPPQQPQQPKKMHIPPVTRATSPPPPAQKSPQPA and SNSSLPPQHHHVSPLSNDSPSNS. Residues 1969 to 1981 are compositionally biased toward pro residues; it reads SPPPPAQKSPQPA. Positions 2030–2039 are enriched in polar residues; the sequence is PLSNDSPSNS. The PI3K/PI4K catalytic domain maps to 2332-2647; the sequence is FSSKMNVITS…TTDSIMETIK (316 aa). The tract at residues 2338 to 2344 is G-loop; it reads VITSKQR. The interval 2512–2520 is catalytic loop; the sequence is GLGDRHPSN. The interval 2532-2557 is activation loop; sequence HIDFGDCFEVAMLREKFPERVPFRLT. Positions 2615–2635 are disordered; that stretch reads DPKTRKDTGGRQNMAGAVLPS. One can recognise an FATC domain in the interval 2665 to 2697; the sequence is EPLQVTEQLAMLTEQATSPLNLCQSYIGWCPFW.

Belongs to the PI3/PI4-kinase family. Ubiquitous. Expressed in all major tissues and organs, including the intestine, gonads and hypodermal cells. Expressed in neurons.

The protein resides in the nucleus. It carries out the reaction L-seryl-[protein] + ATP = O-phospho-L-seryl-[protein] + ADP + H(+). The catalysed reaction is L-threonyl-[protein] + ATP = O-phospho-L-threonyl-[protein] + ADP + H(+). In terms of biological role, serine/threonine-protein kinase that regulates the mRNA translation machinery, probably by modulating the activity of translation factors such as eIF-4G and eIF-2. It may have some protein kinase activity instead of lipid kinase activity. May play a role in P-granule degradation by autophagy in somatic cells during embryogenesis. Required, during larval development, for the establishment of the proper number of germline progenitors, probably upstream of rsks-1 and ife-1. Required for larval development. May act as a mediator of lifespan regulation by insulin signaling and nutrient sensing. The chain is Target of rapamycin homolog from Caenorhabditis elegans.